We begin with the raw amino-acid sequence, 464 residues long: ATP synthase subunit beta (464 aa).

Glycine 153–threonine 160 is an ATP binding site.

This sequence belongs to the ATPase alpha/beta chains family. F-type ATPases have 2 components, CF(1) - the catalytic core - and CF(0) - the membrane proton channel. CF(1) has five subunits: alpha(3), beta(3), gamma(1), delta(1), epsilon(1). CF(0) has three main subunits: a(1), b(2) and c(9-12). The alpha and beta chains form an alternating ring which encloses part of the gamma chain. CF(1) is attached to CF(0) by a central stalk formed by the gamma and epsilon chains, while a peripheral stalk is formed by the delta and b chains.

It localises to the cell inner membrane. The catalysed reaction is ATP + H2O + 4 H(+)(in) = ADP + phosphate + 5 H(+)(out). Functionally, produces ATP from ADP in the presence of a proton gradient across the membrane. The catalytic sites are hosted primarily by the beta subunits. The sequence is that of ATP synthase subunit beta from Burkholderia ambifaria (strain MC40-6).